Here is a 502-residue protein sequence, read N- to C-terminus: Dipeptide and tripeptide permease A (502 aa).

At 1-35 (MSTANNKPTDESVSLNAFKQPKAFYLIFSIELWER) the chain is on the cytoplasmic side. Residues 36 to 56 (FGFYGLQGIMAVYLVKQLGMS) traverse the membrane as a helical segment. The Periplasmic portion of the chain corresponds to 57-60 (EADS). A helical transmembrane segment spans residues 61-81 (ITLFSSFSALVYGLVAVGGWL). Over 82 to 90 (GDKVLGTKR) the chain is Cytoplasmic. Residues 91–111 (VIMLGAVVLAIGYGLVAWSGH) traverse the membrane as a helical segment. A topological domain (periplasmic) is located at residue D112. A helical transmembrane segment spans residues 113–133 (AAVVYMGMATIAVGNGLFKAN). Residues 134 to 154 (PSSLLSTCYNKDDPRLDGAFT) lie on the Cytoplasmic side of the membrane. A helical membrane pass occupies residues 155–175 (MYYMSINIGSFFSMLATPWLA). Residues 176-179 (AKFG) lie on the Periplasmic side of the membrane. A helical transmembrane segment spans residues 180–200 (WSVAFALSFVGMLITVVNFLF). Residues 201 to 218 (CRSWVKNYGSKPDFEPVH) are Cytoplasmic-facing. A helical transmembrane segment spans residues 219 to 239 (IGKLLATIVGVVILATIATWL). At 240–247 (LHNQGVAR) the chain is on the periplasmic side. Residues 248–268 (AVLGVVALGIICIFAKEAFAM) form a helical membrane-spanning segment. Topologically, residues 269–275 (QGAARRK) are cytoplasmic. Residues 276 to 296 (MIVAFILMLQAVVFFVLYSQM) form a helical membrane-spanning segment. The Periplasmic segment spans residues 297–321 (PTSLNFFAIRNVEHSILSIAFEPEQ). Residues 322-342 (FQALNPFWIMIGSPILAAIYN) form a helical membrane-spanning segment. Residues 343–353 (KMGDRLPMPHK) lie on the Cytoplasmic side of the membrane. A helical membrane pass occupies residues 354–374 (FAIGMVLCSGAFLVLPLGTKF). Residues 375-384 (ATDAGIVSVN) are Periplasmic-facing. The chain crosses the membrane as a helical span at residues 385–405 (WLILSYALQSIGELMISGLGL). The Cytoplasmic segment spans residues 406 to 415 (AMVAQLVPQR). Residues 416 to 436 (LMGFIMGSWFLTTAGAALIAG) traverse the membrane as a helical segment. Over 437–460 (KIANLMAVPENVTDPLVSLEVYGR) the chain is Periplasmic. The chain crosses the membrane as a helical span at residues 461–481 (VFMQIGIATAVIAVLMLLTAP). At 482-502 (KLNRMTLEDDKAAKATDTATA) the chain is on the cytoplasmic side.

Belongs to the major facilitator superfamily. Proton-dependent oligopeptide transporter (POT/PTR) (TC 2.A.17) family. DtpA subfamily.

It localises to the cell inner membrane. Its function is as follows. Proton-dependent permease that transports di- and tripeptides. The polypeptide is Dipeptide and tripeptide permease A (Enterobacter sp. (strain 638)).